We begin with the raw amino-acid sequence, 825 residues long: Penicillin-binding protein 1A (825 aa).

Residues 1 to 6 (MKFIKR) are Cytoplasmic-facing. Residues 7–27 (LLVFSLICIILGVTTIFGFYF) form a helical; Signal-anchor for type II membrane protein membrane-spanning segment. Residues 28–825 (YVKSDLPDVA…YSTSSGEELF (798 aa)) lie on the Periplasmic side of the membrane. The segment at 48–216 (MQVFSQDGKL…STMNPIYSVE (169 aa)) is transglycosylase. Residue Glu86 is the Proton donor; for transglycosylase activity of the active site. The transpeptidase stretch occupies residues 413 to 752 (PRTQDGAITA…GKTALPAWVE (340 aa)). Ser471 (acyl-ester intermediate; for transpeptidase activity) is an active-site residue.

In the N-terminal section; belongs to the glycosyltransferase 51 family. It in the C-terminal section; belongs to the transpeptidase family.

The protein localises to the cell inner membrane. It carries out the reaction [GlcNAc-(1-&gt;4)-Mur2Ac(oyl-L-Ala-gamma-D-Glu-L-Lys-D-Ala-D-Ala)](n)-di-trans,octa-cis-undecaprenyl diphosphate + beta-D-GlcNAc-(1-&gt;4)-Mur2Ac(oyl-L-Ala-gamma-D-Glu-L-Lys-D-Ala-D-Ala)-di-trans,octa-cis-undecaprenyl diphosphate = [GlcNAc-(1-&gt;4)-Mur2Ac(oyl-L-Ala-gamma-D-Glu-L-Lys-D-Ala-D-Ala)](n+1)-di-trans,octa-cis-undecaprenyl diphosphate + di-trans,octa-cis-undecaprenyl diphosphate + H(+). It catalyses the reaction Preferential cleavage: (Ac)2-L-Lys-D-Ala-|-D-Ala. Also transpeptidation of peptidyl-alanyl moieties that are N-acyl substituents of D-alanine.. Its pathway is cell wall biogenesis; peptidoglycan biosynthesis. Its function is as follows. Cell wall formation. Synthesis of cross-linked peptidoglycan from the lipid intermediates. The enzyme has a penicillin-insensitive transglycosylase N-terminal domain (formation of linear glycan strands) and a penicillin-sensitive transpeptidase C-terminal domain (cross-linking of the peptide subunits). This is Penicillin-binding protein 1A (mrcA) from Vibrio cholerae serotype O1 (strain ATCC 39315 / El Tor Inaba N16961).